Reading from the N-terminus, the 125-residue chain is UPF0231 protein APL_0968 (125 aa).

Belongs to the UPF0231 family.

This is UPF0231 protein APL_0968 from Actinobacillus pleuropneumoniae serotype 5b (strain L20).